The sequence spans 341 residues: S-adenosylmethionine:tRNA ribosyltransferase-isomerase (341 aa).

This sequence belongs to the QueA family. In terms of assembly, monomer.

It localises to the cytoplasm. The catalysed reaction is 7-aminomethyl-7-carbaguanosine(34) in tRNA + S-adenosyl-L-methionine = epoxyqueuosine(34) in tRNA + adenine + L-methionine + 2 H(+). The protein operates within tRNA modification; tRNA-queuosine biosynthesis. Functionally, transfers and isomerizes the ribose moiety from AdoMet to the 7-aminomethyl group of 7-deazaguanine (preQ1-tRNA) to give epoxyqueuosine (oQ-tRNA). This is S-adenosylmethionine:tRNA ribosyltransferase-isomerase from Thermoanaerobacter sp. (strain X514).